Consider the following 202-residue polypeptide: Venom allergen 5 (202 aa).

Cystine bridges form between C4–C16, C8–C101, C26–C94, and C168–C185. One can recognise an SCP domain in the interval 46–187 (KQHNEFRQKV…WHRHYLVCNY (142 aa)).

Belongs to the CRISP family. Venom allergen 5-like subfamily. In terms of tissue distribution, expressed by the venom gland.

It is found in the secreted. This is Venom allergen 5 from Vespa mandarinia (Asian giant hornet).